A 374-amino-acid chain; its full sequence is MSNSQKPPSLQPNEIIKRTKPDYNWKVIVELGKGGYGTVNKVIKVNEEGFAIDDKEYAMKTEQKFASKHSSRLKIERNVMASYSKCDAQCKEHFPELIDFGQSPVWKWIVMTIVGPSLEELKMKYKPSDIPPSTILQCGLQTMKAIHDFHQIGFLHRDIKPANYCIGYGSKSETIYVLDFGLARKYRLPEWYCSRASHRCEELGRRDDYESWFFMFIDLVDTTLIDWKGLTRPDAYAKKQELFTKLKTYEKEPMFKVISIYLDTLVYDSDVKFGFLRDAITDYARSCKLTLKEPLVWFKERNDNESGSTPTTSATACSPSSSTGTGTGTGVSKIASNIDQKSIASDRNEENSLDGSKTGTWKSTKTRNKKPSRK.

The region spanning 25–296 (WKVIVELGKG…CKLTLKEPLV (272 aa)) is the Protein kinase domain. ATP-binding positions include 31 to 39 (LGKGGYGTV) and Lys60. Residue Asp158 is the Proton acceptor of the active site. Positions 302-374 (NDNESGSTPT…KTRNKKPSRK (73 aa)) are disordered. Residues 306–324 (SGSTPTTSATACSPSSSTG) show a composition bias toward low complexity. Positions 334–343 (IASNIDQKSI) are enriched in polar residues. Residues 364–374 (TKTRNKKPSRK) show a composition bias toward basic residues.

Belongs to the protein kinase superfamily. Ser/Thr protein kinase family.

It carries out the reaction L-seryl-[protein] + ATP = O-phospho-L-seryl-[protein] + ADP + H(+). The catalysed reaction is L-threonyl-[protein] + ATP = O-phospho-L-threonyl-[protein] + ADP + H(+). In Caenorhabditis elegans, this protein is Putative serine/threonine-protein kinase ZK507.3.